The following is a 247-amino-acid chain: Uridylate kinase (247 aa).

17–20 (KFSG) provides a ligand contact to ATP. Glycine 59 is a UMP binding site. Residues glycine 60 and arginine 64 each contribute to the ATP site. UMP-binding positions include aspartate 79 and 140-147 (TGNPFFTT). Residues threonine 167, tyrosine 173, and aspartate 176 each coordinate ATP.

Belongs to the UMP kinase family. As to quaternary structure, homohexamer.

It localises to the cytoplasm. It carries out the reaction UMP + ATP = UDP + ADP. Its pathway is pyrimidine metabolism; CTP biosynthesis via de novo pathway; UDP from UMP (UMPK route): step 1/1. Its activity is regulated as follows. Inhibited by UTP. Functionally, catalyzes the reversible phosphorylation of UMP to UDP. The polypeptide is Uridylate kinase (Legionella pneumophila (strain Paris)).